The following is a 351-amino-acid chain: Geranylgeranyl pyrophosphate synthase (351 aa).

Lys-55, Arg-58, and Gln-93 together coordinate isopentenyl diphosphate. Mg(2+) is bound by residues Asp-100 and Asp-104. Arg-109 contributes to the dimethylallyl diphosphate binding site. Residue Arg-110 coordinates isopentenyl diphosphate. 5 residues coordinate dimethylallyl diphosphate: Lys-196, Thr-197, Gln-236, Lys-253, and Lys-262.

This sequence belongs to the FPP/GGPP synthase family. In terms of assembly, interacts with fps1. The cofactor is Mg(2+).

It is found in the cytoplasm. Its subcellular location is the nucleus. The catalysed reaction is isopentenyl diphosphate + dimethylallyl diphosphate = (2E)-geranyl diphosphate + diphosphate. It catalyses the reaction isopentenyl diphosphate + (2E)-geranyl diphosphate = (2E,6E)-farnesyl diphosphate + diphosphate. It carries out the reaction isopentenyl diphosphate + (2E,6E)-farnesyl diphosphate = (2E,6E,10E)-geranylgeranyl diphosphate + diphosphate. The protein operates within isoprenoid biosynthesis; farnesyl diphosphate biosynthesis; farnesyl diphosphate from geranyl diphosphate and isopentenyl diphosphate: step 1/1. It functions in the pathway isoprenoid biosynthesis; geranyl diphosphate biosynthesis; geranyl diphosphate from dimethylallyl diphosphate and isopentenyl diphosphate: step 1/1. It participates in isoprenoid biosynthesis; geranylgeranyl diphosphate biosynthesis; geranylgeranyl diphosphate from farnesyl diphosphate and isopentenyl diphosphate: step 1/1. Functionally, catalyzes the trans-addition of the 3 molecules of IPP onto DMAPP to form geranylgeranyl pyrophosphate. Required for the membrane attachment of ypt7 and rhb1. May be involved in vesicle trafficking and protein sorting. Required for forespore membrane formation. In Schizosaccharomyces pombe (strain 972 / ATCC 24843) (Fission yeast), this protein is Geranylgeranyl pyrophosphate synthase (spo9).